Consider the following 357-residue polypeptide: Intracellular hyaluronan-binding protein 4 (357 aa).

Disordered stretches follow at residues V56–A116, E150–F186, and P313–T357. Basic and acidic residues predominate over residues P96 to T115. The span at C155–I171 shows a compositional bias: gly residues. The segment covering D176–F186 has biased composition (basic and acidic residues). Residues D348–T357 show a composition bias toward acidic residues.

It belongs to the SERBP1-HABP4 family. As to quaternary structure, associates with ribosomes; promoting ribosome stabilization. Interacts with EEF2/eEF2; promoting ribosome stabilization.

The protein localises to the nucleus. It is found in the cytoplasm. The protein resides in the stress granule. Its subcellular location is the sarcoplasm. It localises to the nuclear body. The protein localises to the nucleolus. It is found in the nucleus speckle. The protein resides in the cajal body. Its subcellular location is the gem. Ribosome-binding protein that promotes ribosome hibernation, a process during which ribosomes are stabilized in an inactive state and preserved from proteasomal degradation. Acts via its association with EEF2/eEF2 factor at the A-site of the ribosome, promoting ribosome stabilization in an inactive state compatible with storage. Plays a key role in ribosome hibernation in the mature egg by promoting ribosome stabilization. Ribosomes, which are produced in large quantities during oogenesis, are stored and translationally repressed in the egg and early embryo. The chain is Intracellular hyaluronan-binding protein 4 from Gallus gallus (Chicken).